We begin with the raw amino-acid sequence, 260 residues long: Global transcriptional regulator CodY (260 aa).

Residues 1–159 (MPNLLEKTRK…SSTVVGIQLL (159 aa)) are GAF domain. Positions 207 to 226 (ASVIADRIGITRSVIVNALR) form a DNA-binding region, H-T-H motif.

It belongs to the CodY family.

The protein resides in the cytoplasm. DNA-binding global transcriptional regulator which is involved in the adaptive response to starvation and acts by directly or indirectly controlling the expression of numerous genes in response to nutrient availability. During rapid exponential growth, CodY is highly active and represses genes whose products allow adaptation to nutrient depletion. In Streptococcus pyogenes serotype M1, this protein is Global transcriptional regulator CodY.